An 87-amino-acid chain; its full sequence is Acyl-CoA-binding protein (87 aa).

Serine 2 is modified (N-acetylserine). Positions 2 to 87 constitute an ACB domain; that stretch reads SQAEFEKAAE…VEELKQKYGI (86 aa). Lysine 8 carries the post-translational modification N6-acetyllysine; alternate. Lysine 8 carries the post-translational modification N6-succinyllysine; alternate. Lysine 14 lines the an acyl-CoA pocket. N6-succinyllysine is present on lysine 17. An N6-acetyllysine modification is found at lysine 19. Tyrosine 29 is modified (phosphotyrosine). An acyl-CoA-binding positions include 29–33, lysine 51, lysine 55, and tyrosine 74; that span reads YSHYK. N6-acetyllysine is present on lysine 51. The residue at position 55 (lysine 55) is an N6-acetyllysine; alternate. An N6-succinyllysine; alternate modification is found at lysine 55. At lysine 55 the chain carries N6-(2-hydroxyisobutyryl)lysine; alternate. Residue lysine 55 is modified to N6-malonyllysine; alternate. Lysine 77 carries the N6-acetyllysine; alternate modification. Lysine 77 is modified (N6-succinyllysine; alternate).

Belongs to the ACBP family. In terms of assembly, monomer.

Its subcellular location is the endoplasmic reticulum. It localises to the golgi apparatus. In terms of biological role, binds medium- and long-chain acyl-CoA esters with very high affinity and may function as an intracellular carrier of acyl-CoA esters. It is also able to displace diazepam from the benzodiazepine (BZD) recognition site located on the GABA type A receptor. It is therefore possible that this protein also acts as a neuropeptide to modulate the action of the GABA receptor. This Oryctolagus cuniculus (Rabbit) protein is Acyl-CoA-binding protein (DBI).